The primary structure comprises 503 residues: Aspartyl/glutamyl-tRNA(Asn/Gln) amidotransferase subunit B (503 aa).

It belongs to the GatB/GatE family. GatB subfamily. Heterotrimer of A, B and C subunits.

It carries out the reaction L-glutamyl-tRNA(Gln) + L-glutamine + ATP + H2O = L-glutaminyl-tRNA(Gln) + L-glutamate + ADP + phosphate + H(+). It catalyses the reaction L-aspartyl-tRNA(Asn) + L-glutamine + ATP + H2O = L-asparaginyl-tRNA(Asn) + L-glutamate + ADP + phosphate + 2 H(+). In terms of biological role, allows the formation of correctly charged Asn-tRNA(Asn) or Gln-tRNA(Gln) through the transamidation of misacylated Asp-tRNA(Asn) or Glu-tRNA(Gln) in organisms which lack either or both of asparaginyl-tRNA or glutaminyl-tRNA synthetases. The reaction takes place in the presence of glutamine and ATP through an activated phospho-Asp-tRNA(Asn) or phospho-Glu-tRNA(Gln). The chain is Aspartyl/glutamyl-tRNA(Asn/Gln) amidotransferase subunit B from Cereibacter sphaeroides (strain ATCC 17029 / ATH 2.4.9) (Rhodobacter sphaeroides).